We begin with the raw amino-acid sequence, 349 residues long: MIEFDNLTYLHGKPQGTGLLKANPEDFVVVEDLGFEPDGEGEHILVRILKNGCNTRFVADALAKFLKIHAREVSFAGQKDKHAVTEQWLCARVPGKEMPELSAFQLEGCQVLEYARHKRKLRLGALKGNAFTLVLREVSNRDDVEQRLIDICVKGVPNYFGAQRFGIGGSNLQGALRWAQTNTPVRDRNKRSFWLSAARSALFNQIVAERLKKADVNQVVDGDALQLAGRGSWFVATTEELAELQRRVNDKELMITAALPGSGEWGTQREALAFEQAAVAAETELQALLVREKVEAARRAMLLYPQQLSWNWWDDVTVEIRFWLPAGSFATSVVRELINTTGDYAHIAE.

F27 is a binding site for substrate. The active-site Nucleophile is the D80. Position 129 (N129) interacts with substrate. The region spanning 155–303 (GVPNYFGAQR…VEAARRAMLL (149 aa)) is the TRUD domain. Substrate is bound at residue F329.

This sequence belongs to the pseudouridine synthase TruD family.

It catalyses the reaction uridine(13) in tRNA = pseudouridine(13) in tRNA. Responsible for synthesis of pseudouridine from uracil-13 in transfer RNAs. This Escherichia coli (strain 55989 / EAEC) protein is tRNA pseudouridine synthase D.